Reading from the N-terminus, the 257-residue chain is Ribosomal RNA small subunit methyltransferase J (257 aa).

S-adenosyl-L-methionine is bound by residues 107 to 108 (RD), 123 to 124 (ER), and D177.

The protein belongs to the methyltransferase superfamily. RsmJ family.

It is found in the cytoplasm. It carries out the reaction guanosine(1516) in 16S rRNA + S-adenosyl-L-methionine = N(2)-methylguanosine(1516) in 16S rRNA + S-adenosyl-L-homocysteine + H(+). Its function is as follows. Specifically methylates the guanosine in position 1516 of 16S rRNA. In Haemophilus influenzae (strain PittGG), this protein is Ribosomal RNA small subunit methyltransferase J.